Here is a 357-residue protein sequence, read N- to C-terminus: RNA-binding protein 43 (357 aa).

An RRM domain is found at 15–104 (RTVVVAGLPV…VSLRVSHFGD (90 aa)).

This Homo sapiens (Human) protein is RNA-binding protein 43 (RBM43).